The chain runs to 340 residues: Phosphoribosylformylglycinamidine cyclo-ligase (340 aa).

The protein belongs to the AIR synthase family.

The protein localises to the cytoplasm. It catalyses the reaction 2-formamido-N(1)-(5-O-phospho-beta-D-ribosyl)acetamidine + ATP = 5-amino-1-(5-phospho-beta-D-ribosyl)imidazole + ADP + phosphate + H(+). The protein operates within purine metabolism; IMP biosynthesis via de novo pathway; 5-amino-1-(5-phospho-D-ribosyl)imidazole from N(2)-formyl-N(1)-(5-phospho-D-ribosyl)glycinamide: step 2/2. This Streptococcus mutans serotype c (strain ATCC 700610 / UA159) protein is Phosphoribosylformylglycinamidine cyclo-ligase.